The following is a 396-amino-acid chain: Phosphoglycerate kinase (396 aa).

Residues 21–23 (DFN), arginine 36, 59–62 (HFDR), arginine 118, and arginine 151 each bind substrate. Residues lysine 201, glutamate 323, and 353–356 (GGDT) each bind ATP.

It belongs to the phosphoglycerate kinase family. In terms of assembly, monomer.

It is found in the cytoplasm. The enzyme catalyses (2R)-3-phosphoglycerate + ATP = (2R)-3-phospho-glyceroyl phosphate + ADP. It participates in carbohydrate degradation; glycolysis; pyruvate from D-glyceraldehyde 3-phosphate: step 2/5. The chain is Phosphoglycerate kinase from Caulobacter sp. (strain K31).